Here is a 466-residue protein sequence, read N- to C-terminus: D-inositol 3-phosphate glycosyltransferase (466 aa).

Residues 1 to 12 show a composition bias toward low complexity; sequence MRPMRAGAGAAG. The segment at 1-22 is disordered; the sequence is MRPMRAGAGAAGESCKDDGVRP. Residue His43 participates in 1D-myo-inositol 3-phosphate binding. UDP-N-acetyl-alpha-D-glucosamine is bound by residues 49–50 and Gly57; that span reads QP. 1D-myo-inositol 3-phosphate contacts are provided by residues 54–59, Lys112, Tyr145, Thr169, and Arg189; that span reads DAGGMN. UDP-N-acetyl-alpha-D-glucosamine-binding residues include Arg263, Lys268, and Gln321. Mg(2+)-binding residues include Phe330, His331, and Val333. UDP-N-acetyl-alpha-D-glucosamine contacts are provided by Glu343 and Glu351. Thr357 contributes to the Mg(2+) binding site. The disordered stretch occupies residues 446–466; the sequence is VRDPVAARKPRRWTARRGVGA.

This sequence belongs to the glycosyltransferase group 1 family. MshA subfamily. Homodimer.

The enzyme catalyses 1D-myo-inositol 3-phosphate + UDP-N-acetyl-alpha-D-glucosamine = 1D-myo-inositol 2-acetamido-2-deoxy-alpha-D-glucopyranoside 3-phosphate + UDP + H(+). Functionally, catalyzes the transfer of a N-acetyl-glucosamine moiety to 1D-myo-inositol 3-phosphate to produce 1D-myo-inositol 2-acetamido-2-deoxy-glucopyranoside 3-phosphate in the mycothiol biosynthesis pathway. The sequence is that of D-inositol 3-phosphate glycosyltransferase from Mycobacterium marinum (strain ATCC BAA-535 / M).